Here is a 122-residue protein sequence, read N- to C-terminus: Probable non-specific lipid-transfer protein 3 (122 aa).

An N-terminal signal peptide occupies residues 1-29 (MARLNSKAVAAAVVLAAVVLMMAGREASA). Intrachain disulfides connect Cys33/Cys81, Cys43/Cys58, Cys59/Cys104, and Cys79/Cys118.

This sequence belongs to the plant LTP family. As to expression, expressed in phloem. Also detected in the epidermis near the vascular tissues in resistant plants infected by Hessian fly larvae.

Functionally, plant non-specific lipid-transfer proteins transfer phospholipids as well as galactolipids across membranes. May play a role in wax or cutin deposition in the cell walls of expanding epidermal cells and certain secretory tissues. The polypeptide is Probable non-specific lipid-transfer protein 3 (LTP3) (Triticum aestivum (Wheat)).